Reading from the N-terminus, the 372-residue chain is Glutamate 5-kinase (372 aa).

K14 contacts ATP. 3 residues coordinate substrate: S54, D141, and N153. 173 to 174 (TD) provides a ligand contact to ATP. Positions 280-358 (RGHVVIDDGA…GEIESVLGYM (79 aa)) constitute a PUA domain.

This sequence belongs to the glutamate 5-kinase family.

The protein localises to the cytoplasm. The catalysed reaction is L-glutamate + ATP = L-glutamyl 5-phosphate + ADP. The protein operates within amino-acid biosynthesis; L-proline biosynthesis; L-glutamate 5-semialdehyde from L-glutamate: step 1/2. Functionally, catalyzes the transfer of a phosphate group to glutamate to form L-glutamate 5-phosphate. In Paraburkholderia phymatum (strain DSM 17167 / CIP 108236 / LMG 21445 / STM815) (Burkholderia phymatum), this protein is Glutamate 5-kinase.